We begin with the raw amino-acid sequence, 209 residues long: Kynurenine formamidase (209 aa).

A substrate-binding site is contributed by phenylalanine 18. Positions 48, 52, and 54 each coordinate Zn(2+). The active-site Proton donor/acceptor is histidine 58. The Zn(2+) site is built by histidine 160 and glutamate 172.

The protein belongs to the Cyclase 1 superfamily. KynB family. Homodimer. The cofactor is Zn(2+).

The catalysed reaction is N-formyl-L-kynurenine + H2O = L-kynurenine + formate + H(+). The protein operates within amino-acid degradation; L-tryptophan degradation via kynurenine pathway; L-kynurenine from L-tryptophan: step 2/2. Its function is as follows. Catalyzes the hydrolysis of N-formyl-L-kynurenine to L-kynurenine, the second step in the kynurenine pathway of tryptophan degradation. The sequence is that of Kynurenine formamidase from Bordetella avium (strain 197N).